Reading from the N-terminus, the 203-residue chain is V-type ATP synthase subunit D (203 aa).

The protein belongs to the V-ATPase D subunit family.

Produces ATP from ADP in the presence of a proton gradient across the membrane. This Thermotoga neapolitana (strain ATCC 49049 / DSM 4359 / NBRC 107923 / NS-E) protein is V-type ATP synthase subunit D.